Reading from the N-terminus, the 161-residue chain is Sterile alpha motif domain-containing protein 12 (161 aa).

The interval 44–64 is disordered; that stretch reads QKVPDQKGTPKRLQGEAETAK. One can recognise an SAM domain in the interval 77 to 143; the sequence is WTQQDVCKWL…LQQVLQLKVR (67 aa).

The chain is Sterile alpha motif domain-containing protein 12 (Samd12) from Mus musculus (Mouse).